A 383-amino-acid chain; its full sequence is Cyclin-D4-2 (383 aa).

Residues 51 to 62 show a composition bias toward gly residues; the sequence is AAGGGGGSGGGG. 3 disordered regions span residues 51-70, 313-335, and 354-383; these read AAGG…EDMF, QPKP…PESP, and ATIA…KLSR. Residues 323-335 are compositionally biased toward low complexity; it reads SASASSSSVPESP.

This sequence belongs to the cyclin family. Cyclin D subfamily.

This Oryza sativa subsp. japonica (Rice) protein is Cyclin-D4-2 (CYCD4-2).